The chain runs to 164 residues: Elicitin-like protein 2 (164 aa).

An N-terminal signal peptide occupies residues 1 to 22 (MFSKTLVVLAAVAAVTVNGLTA). Cystine bridges form between cysteine 25–cysteine 91, cysteine 47–cysteine 76, and cysteine 71–cysteine 118. The disordered stretch occupies residues 121–164 (ISGGGSTPTTAPPSGTTPTTPTTAPPTGTTPGVTPSPTTPKPAC). The segment covering 127 to 156 (TPTTAPPSGTTPTTPTTAPPTGTTPGVTPS) has biased composition (low complexity).

The protein belongs to the elicitin family.

The protein resides in the secreted. Functionally, induces local and distal defense responses (incompatible hypersensitive reaction) in plants from the solanaceae and cruciferae families. Elicits leaf necrosis and causes the accumulation of pathogenesis-related proteins. Might interact with the lipidic molecules of the plasma membrane. The polypeptide is Elicitin-like protein 2 (POD-2) (Pythium oligandrum (Mycoparasitic fungus)).